The sequence spans 531 residues: Tyrosine/DOPA decarboxylase 2 (531 aa).

N6-(pyridoxal phosphate)lysine is present on K319.

Belongs to the group II decarboxylase family. As to quaternary structure, homodimer. Pyridoxal 5'-phosphate is required as a cofactor. In terms of tissue distribution, predominantly expressed in the roots and stems, while a lower level expression is seen in the sepals and carpels of fully expanded flowers.

The enzyme catalyses L-tyrosine + H(+) = tyramine + CO2. It catalyses the reaction L-dopa + H(+) = dopamine + CO2. The catalysed reaction is 5-hydroxy-L-tryptophan + H(+) = serotonin + CO2. Marginally higher substrate specificity for L-DOPA over L-tyrosine. The sequence is that of Tyrosine/DOPA decarboxylase 2 (TYDC2) from Papaver somniferum (Opium poppy).